The following is a 264-amino-acid chain: Hydroxyethylthiazole kinase (264 aa).

M41 contributes to the substrate binding site. Residues K117 and S163 each contribute to the ATP site. G190 contributes to the substrate binding site.

This sequence belongs to the Thz kinase family. Mg(2+) is required as a cofactor.

The catalysed reaction is 5-(2-hydroxyethyl)-4-methylthiazole + ATP = 4-methyl-5-(2-phosphooxyethyl)-thiazole + ADP + H(+). It functions in the pathway cofactor biosynthesis; thiamine diphosphate biosynthesis; 4-methyl-5-(2-phosphoethyl)-thiazole from 5-(2-hydroxyethyl)-4-methylthiazole: step 1/1. Its function is as follows. Catalyzes the phosphorylation of the hydroxyl group of 4-methyl-5-beta-hydroxyethylthiazole (THZ). This chain is Hydroxyethylthiazole kinase, found in Thermoanaerobacter pseudethanolicus (strain ATCC 33223 / 39E) (Clostridium thermohydrosulfuricum).